The following is a 640-amino-acid chain: Probable potassium transport system protein Kup (640 aa).

Transmembrane regions (helical) follow at residues 26–46, 69–89, 117–137, 155–175, 186–206, 224–244, 265–285, 297–317, 355–375, 384–404, 415–435, and 437–457; these read IAGL…TSPL, ILSL…VLFI, AWVL…DGMI, PAFR…LFVI, IFGP…IAGI, FFAD…LAIT, WFLV…ALIL, LLVP…ATII, IYVP…VVGF, AYGI…FVVV, AGLF…ATTV, and ILAG…LLTT.

The protein belongs to the HAK/KUP transporter (TC 2.A.72) family.

It localises to the cell inner membrane. It catalyses the reaction K(+)(in) + H(+)(in) = K(+)(out) + H(+)(out). Its function is as follows. Transport of potassium into the cell. Likely operates as a K(+):H(+) symporter. The sequence is that of Probable potassium transport system protein Kup from Aromatoleum aromaticum (strain DSM 19018 / LMG 30748 / EbN1) (Azoarcus sp. (strain EbN1)).